The chain runs to 318 residues: Thioredoxin reductase (318 aa).

36–43 is an FAD binding site; that stretch reads TGMQQGGQ. A disulfide bridge links C136 with C139. Residue 286 to 295 coordinates FAD; sequence DVMDHNYRQA.

Belongs to the class-II pyridine nucleotide-disulfide oxidoreductase family. Homodimer. The cofactor is FAD.

It localises to the cytoplasm. The catalysed reaction is [thioredoxin]-dithiol + NADP(+) = [thioredoxin]-disulfide + NADPH + H(+). The sequence is that of Thioredoxin reductase (trxB) from Vibrio cholerae serotype O1 (strain ATCC 39315 / El Tor Inaba N16961).